A 173-amino-acid chain; its full sequence is C-phycocyanin beta subunit (173 aa).

An N4-methylasparagine modification is found at Asn-73. 2 residues coordinate (2R,3E)-phycocyanobilin: Cys-83 and Cys-154.

Belongs to the phycobiliprotein family. Heterodimer of an alpha and a beta subunit. Part of 2 PBS rod complexes, the conventional PBS rod and a photosystem I-specific CpcL-PBS rod. In terms of processing, contains two covalently linked bilin chromophores.

The protein localises to the cellular thylakoid membrane. Functionally, light-harvesting photosynthetic bile pigment-protein from the phycobiliprotein complex (phycobilisome, PBS). Phycocyanin is the major phycobiliprotein in the PBS rod. The protein is C-phycocyanin beta subunit (cpcB) of Nostoc sp. (strain PCC 7120 / SAG 25.82 / UTEX 2576).